The primary structure comprises 210 residues: Protein-L-isoaspartate O-methyltransferase (210 aa).

Residue S60 is part of the active site.

Belongs to the methyltransferase superfamily. L-isoaspartyl/D-aspartyl protein methyltransferase family.

The protein localises to the cytoplasm. The catalysed reaction is [protein]-L-isoaspartate + S-adenosyl-L-methionine = [protein]-L-isoaspartate alpha-methyl ester + S-adenosyl-L-homocysteine. Functionally, catalyzes the methyl esterification of L-isoaspartyl residues in peptides and proteins that result from spontaneous decomposition of normal L-aspartyl and L-asparaginyl residues. It plays a role in the repair and/or degradation of damaged proteins. This chain is Protein-L-isoaspartate O-methyltransferase, found in Xylella fastidiosa (strain M12).